Reading from the N-terminus, the 612-residue chain is Phosphopentomutase (612 aa).

Alanine 2 carries the N-acetylalanine modification. Alpha-D-glucose 1,6-bisphosphate-binding residues include arginine 63 and serine 165. Residue serine 165 is the Phosphoserine intermediate of the active site. Residues serine 165, aspartate 322, aspartate 324, and aspartate 326 each coordinate Mg(2+). The residue at position 165 (serine 165) is a Phosphoserine. Alpha-D-glucose 1,6-bisphosphate contacts are provided by aspartate 326, arginine 327, threonine 400, glutamate 424, and lysine 438.

The protein belongs to the phosphohexose mutase family. In terms of assembly, monomer. It depends on Mg(2+) as a cofactor.

It localises to the cytoplasm. Its subcellular location is the cytosol. It carries out the reaction alpha-D-ribose 1-phosphate = D-ribose 5-phosphate. The catalysed reaction is 2-deoxy-alpha-D-ribose 1-phosphate = 2-deoxy-D-ribose 5-phosphate. The enzyme catalyses alpha-D-glucose 1-phosphate = alpha-D-glucose 6-phosphate. It catalyses the reaction O-phospho-L-seryl-[protein] + alpha-D-glucose 1-phosphate = alpha-D-glucose 1,6-bisphosphate + L-seryl-[protein]. It carries out the reaction alpha-D-glucose 1,6-bisphosphate + L-seryl-[protein] = O-phospho-L-seryl-[protein] + alpha-D-glucose 6-phosphate. Its activity is regulated as follows. The phosphomutase activity is stimulated by glucose 1,6-bisphosphate. Catalyzes the conversion of the nucleoside breakdown products ribose-1-phosphate and deoxyribose-1-phosphate to the corresponding 5-phosphopentoses. Catalyzes the reversible isomerization of alpha-D-glucose 1-phosphate to alpha-D-glucose 6-phosphate but with a lower catalytic efficiency. The mechanism proceeds via the intermediate compound alpha-D-glucose 1,6-bisphosphate. In vitro, also has a low glucose 1,6-bisphosphate synthase activity which is most probably not physiologically relevant. The sequence is that of Phosphopentomutase from Homo sapiens (Human).